The following is a 521-amino-acid chain: Cysteine protease atg-4.2 (521 aa).

Residues 90 to 100 show a composition bias toward low complexity; that stretch reads MMGSIRPSSSS. Residues 90–109 are disordered; that stretch reads MMGSIRPSSSSQDVHSTGEI. The Nucleophile role is filled by Cys203. Residues Asp394 and His396 contribute to the active site. A disordered region spans residues 499-521; that stretch reads PSYEREVSETEQAQADKHGFEML.

It belongs to the peptidase C54 family.

Its subcellular location is the cytoplasm. It catalyses the reaction [protein]-C-terminal L-amino acid-glycyl-phosphatidylethanolamide + H2O = [protein]-C-terminal L-amino acid-glycine + a 1,2-diacyl-sn-glycero-3-phosphoethanolamine. Cysteine protease required for autophagy. Cleaves the C-terminal amino acid of ATG8 family proteins lgg-1, to reveal a C-terminal glycine. Exposure of the glycine at the C-terminus is essential for ATG8 proteins conjugation to phosphatidylethanolamine (PE) and insertion to membranes, which is necessary for autophagy. Its cleavage activity is functionally redundant to atg-4.1, but it cleaves lgg-1 precursors less efficiently than atg-4.1. In contrast to atg-4.1, plays a more significant role in the later phases of autophagy and in addition has a role in autophagosome maturation. Acts redundantly with atg-4.1 to promote the lgg-1 delipidation to release the protein from membranes, which facilitates multiple events during macroautophagy. Regulates the accumulation of autophagic structures in neurons and is specifically, required for the maturation and elimination of autophagosomes from the synaptic region of AIY interneurons. The sequence is that of Cysteine protease atg-4.2 from Caenorhabditis elegans.